Here is a 108-residue protein sequence, read N- to C-terminus: Ig kappa chain V-V region HP R16.7 (108 aa).

Residues Asp1 to Cys23 form a framework-1 region. An intrachain disulfide couples Cys23 to Cys88. A complementarity-determining-1 region spans residues Arg24–Asn34. A framework-2 region spans residues Trp35–Tyr49. The complementarity-determining-2 stretch occupies residues Tyr50–Ser56. The interval Gly57 to Cys88 is framework-3. Residues Gln89–Thr97 form a complementarity-determining-3 region. The framework-4 stretch occupies residues Phe98–Arg108.

The chain is Ig kappa chain V-V region HP R16.7 from Mus musculus (Mouse).